The primary structure comprises 290 residues: Protein CREG2 (290 aa).

A signal peptide spans 1–31; the sequence is MSVRRGRRPARPGTRLSWLLCCSALLSPAAG. Residues Asn165 and Asn166 are each glycosylated (N-linked (GlcNAc...) asparagine).

The protein belongs to the CREG family. It is not sure whether N-glycosylation is on Asn-165 and/or Asn-166. Brain specific mainly in the limbic system and faintly in the spinal cord but not in cerebellum.

It localises to the secreted. This Homo sapiens (Human) protein is Protein CREG2 (CREG2).